Reading from the N-terminus, the 1034-residue chain is Receptor-type guanylate cyclase gcy-25 (1034 aa).

The N-terminal stretch at 1 to 16 (MLLLLLLLKISTFVDS) is a signal peptide. Residues 17–409 (FQIGHLEFEN…YDNNLCSDFH (393 aa)) are Extracellular-facing. N-linked (GlcNAc...) asparagine glycosylation is found at N28, N224, N301, N308, and N373. Residues 410–430 (VFMIAAIVFSILLIPMAIAFY) form a helical membrane-spanning segment. The Cytoplasmic portion of the chain corresponds to 431–1034 (LQRKEHLIQQ…DNSKKMFLNV (604 aa)). The Protein kinase domain maps to 464-749 (RVSTISTARA…KITDAVNREF (286 aa)). ATP-binding positions include 470 to 478 (TARASYSSI) and K497. Residues 758-785 (IDQMIEMIDEYSANLEQIVAERTRELEQ) are a coiled coil. The region spanning 821-951 (TLLVVDVCQF…DTVNMACRMA (131 aa)) is the Guanylate cyclase domain.

Belongs to the adenylyl cyclase class-4/guanylyl cyclase family. As to expression, expressed in AQR, PQR and URX sensory neurons.

The protein localises to the cell membrane. The enzyme catalyses GTP = 3',5'-cyclic GMP + diphosphate. Its function is as follows. Guanylate cyclase involved in the production of the second messenger cGMP. In Caenorhabditis elegans, this protein is Receptor-type guanylate cyclase gcy-25.